The sequence spans 259 residues: Binding partner of ACD11 1 (259 aa).

In terms of domain architecture, RRM spans 6 to 77 (RSVKVGNLSS…QSVIIELAPN (72 aa)). The tract at residues 219 to 259 (GEVGQKTKEKVEAEQPSQPAQSQQQLPEGYSPIHSSEYSKN) is disordered. A compositionally biased stretch (low complexity) spans 232–243 (EQPSQPAQSQQQ).

Interacts with ACD11, PR1F2 and PR1F3.

The protein localises to the cytoplasm. It localises to the membrane. The chain is Binding partner of ACD11 1 (BPA1) from Arabidopsis thaliana (Mouse-ear cress).